The chain runs to 327 residues: tRNA-modifying protein YgfZ (327 aa).

Residues tryptophan 27 and tryptophan 189 each contribute to the folate site.

It belongs to the tRNA-modifying YgfZ family.

It is found in the cytoplasm. In terms of biological role, folate-binding protein involved in regulating the level of ATP-DnaA and in the modification of some tRNAs. It is probably a key factor in regulatory networks that act via tRNA modification, such as initiation of chromosomal replication. This chain is tRNA-modifying protein YgfZ, found in Klebsiella pneumoniae (strain 342).